The sequence spans 525 residues: Mitochondrial-processing peptidase subunit alpha (525 aa).

A mitochondrion-targeting transit peptide spans 1–33 (MAAVVLAATRLLRGSGSWGCSRLRFGPPAYRRF). The residue at position 64 (Lys64) is an N6-succinyllysine. Position 299 is an N6-acetyllysine (Lys299).

It belongs to the peptidase M16 family. As to quaternary structure, heterodimer of PMPCA (alpha) and PMPCB (beta) subunits, forming the mitochondrial processing protease (MPP) in which PMPCA is involved in substrate recognition and binding and PMPCB is the catalytic subunit. As to expression, ubiquitously expressed with highest expression in fetal tissues and adult brain, cerebellum and cerebellar vermis.

It localises to the mitochondrion matrix. It is found in the mitochondrion inner membrane. Its function is as follows. Substrate recognition and binding subunit of the essential mitochondrial processing protease (MPP), which cleaves the mitochondrial sequence off newly imported precursors proteins. This Homo sapiens (Human) protein is Mitochondrial-processing peptidase subunit alpha (PMPCA).